Consider the following 1038-residue polypeptide: Ribosome quality control complex subunit 2 (1038 aa).

A coiled-coil region spans residues 350–383 (ALRIQNQESQAQKKIDDARAENDRKIQALLDVQE). Disordered regions lie at residues 459-499 (LNTS…MKRK), 708-824 (KTSG…DEPG), and 877-898 (QRKKEEIMKREVREDRKNKREK). Residues 713–768 (EDNGDDDEEEEEEEEEEEEEEEEEEEEEEEEKEEEEKEEEQQQDEDDSNEVNGLEK) adopt a coiled-coil conformation. Residues 714–761 (DNGDDDEEEEEEEEEEEEEEEEEEEEEEEEKEEEEKEEEQQQDEDDSN) are compositionally biased toward acidic residues. The span at 780–794 (SFEHDNLEKDIEKHC) shows a compositional bias: basic and acidic residues. Polar residues predominate over residues 795-805 (TISSDTDSDSG). Ser797 carries the phosphoserine modification. Residues 830-912 (IENINSNVRG…QALKFTKKEK (83 aa)) are a coiled coil. Over residues 877–894 (QRKKEEIMKREVREDRKN) the composition is skewed to basic and acidic residues.

This sequence belongs to the NEMF family. As to quaternary structure, component of the ribosome quality control complex (RQC), composed of the E3 ubiquitin ligase RKR1/LTN1, RQC1 and RQC2, as well as CDC48 and its ubiquitin-binding cofactors associated with the 60S ribosomal subunit. RQC2 binds to the 40S-binding surface of tRNAs.

The protein localises to the cytoplasm. Key component of the ribosome quality control complex (RQC), a ribosome-associated complex that mediates the extraction of incompletely synthesized nascent chains from stalled ribosomes as well as their ubiquitin-mediated proteasomal degradation. Thereby, frees 60S subunit ribosomes from the stalled translation complex and prevents the accumulation of nascent polypeptide chains that are potentially toxic for the cell. Within the RQC complex, RQC2 specifically binds stalled 60S ribosomal subunits by recognizing an exposed, nascent chain-conjugated tRNA moiety and promotes the recruitment of RKR1/LTN1 to stalled 60S subunits. Following binding to stalled 60S ribosomal subunits, RQC2 mediates CAT tailing by recruiting alanine- and threonine-charged tRNA to the A-site and directing the elongation of stalled nascent chains independently of mRNA or 40S subunits, leading to non-templated C-terminal Ala and Thr extensions (CAT tails). CAT tails promote the RKR1/LTN1-mediated ubiquitination of incompletely synthesized nascent polypeptides: CAT tailing facilitates RKR1/LTN1-dependent ubiquitination by exposing lysine residues that would otherwise remain buried in the ribosomal exit tunnel. Following ubiquitination, incompletely synthesized nascent polypeptides are recognized by CDC48 and degraded by the proteasome. CAT-tailed proteins tend to aggregate and sequester chaperones and can induce proteotoxic stress; their RKR1/LTN1-dependent ubiquitination and degradation is required to prevent proteotoxic stress. The sequence is that of Ribosome quality control complex subunit 2 from Saccharomyces cerevisiae (strain ATCC 204508 / S288c) (Baker's yeast).